The following is a 333-amino-acid chain: Mevalonate kinase (333 aa).

An ATP-binding site is contributed by 109–119 (PVGAGLGSSAA). Aspartate 160 functions as the Proton acceptor in the catalytic mechanism.

It belongs to the GHMP kinase family. Mevalonate kinase subfamily. As to quaternary structure, homodimer. Mg(2+) serves as cofactor.

Its subcellular location is the cytoplasm. It carries out the reaction (R)-mevalonate + ATP = (R)-5-phosphomevalonate + ADP + H(+). It participates in isoprenoid biosynthesis; isopentenyl diphosphate biosynthesis via mevalonate pathway; isopentenyl diphosphate from (R)-mevalonate: step 1/3. In terms of biological role, catalyzes the phosphorylation of (R)-mevalonate (MVA) to (R)-mevalonate 5-phosphate (MVAP). Functions in the mevalonate (MVA) pathway leading to isopentenyl diphosphate (IPP), a key precursor for the biosynthesis of isoprenoid compounds such as archaeal membrane lipids. The protein is Mevalonate kinase of Thermococcus sibiricus (strain DSM 12597 / MM 739).